The chain runs to 356 residues: Holliday junction branch migration complex subunit RuvB (356 aa).

Residues 4–191 form a large ATPase domain (RuvB-L) region; it reads TDKLATEQRI…FGIVARLEFY (188 aa). Residues leucine 30, arginine 31, glycine 72, lysine 75, threonine 76, threonine 77, 138–140, arginine 181, tyrosine 191, and arginine 228 each bind ATP; that span reads EDY. Residue threonine 76 participates in Mg(2+) binding. The small ATPAse domain (RuvB-S) stretch occupies residues 192 to 262; that stretch reads DAEQLSRIVR…VADAALAMLD (71 aa). Positions 265–356 are head domain (RuvB-H); sequence PVGFDLMDRK…RDEWDTPDGK (92 aa). DNA-binding residues include arginine 301, arginine 320, and arginine 325.

The protein belongs to the RuvB family. As to quaternary structure, homohexamer. Forms an RuvA(8)-RuvB(12)-Holliday junction (HJ) complex. HJ DNA is sandwiched between 2 RuvA tetramers; dsDNA enters through RuvA and exits via RuvB. An RuvB hexamer assembles on each DNA strand where it exits the tetramer. Each RuvB hexamer is contacted by two RuvA subunits (via domain III) on 2 adjacent RuvB subunits; this complex drives branch migration. In the full resolvosome a probable DNA-RuvA(4)-RuvB(12)-RuvC(2) complex forms which resolves the HJ.

The protein resides in the cytoplasm. The enzyme catalyses ATP + H2O = ADP + phosphate + H(+). Functionally, the RuvA-RuvB-RuvC complex processes Holliday junction (HJ) DNA during genetic recombination and DNA repair, while the RuvA-RuvB complex plays an important role in the rescue of blocked DNA replication forks via replication fork reversal (RFR). RuvA specifically binds to HJ cruciform DNA, conferring on it an open structure. The RuvB hexamer acts as an ATP-dependent pump, pulling dsDNA into and through the RuvAB complex. RuvB forms 2 homohexamers on either side of HJ DNA bound by 1 or 2 RuvA tetramers; 4 subunits per hexamer contact DNA at a time. Coordinated motions by a converter formed by DNA-disengaged RuvB subunits stimulates ATP hydrolysis and nucleotide exchange. Immobilization of the converter enables RuvB to convert the ATP-contained energy into a lever motion, pulling 2 nucleotides of DNA out of the RuvA tetramer per ATP hydrolyzed, thus driving DNA branch migration. The RuvB motors rotate together with the DNA substrate, which together with the progressing nucleotide cycle form the mechanistic basis for DNA recombination by continuous HJ branch migration. Branch migration allows RuvC to scan DNA until it finds its consensus sequence, where it cleaves and resolves cruciform DNA. The polypeptide is Holliday junction branch migration complex subunit RuvB (Burkholderia cenocepacia (strain HI2424)).